Consider the following 191-residue polypeptide: Fe/S biogenesis protein NfuA (191 aa).

[4Fe-4S] cluster contacts are provided by C149 and C152.

The protein belongs to the NfuA family. As to quaternary structure, homodimer. It depends on [4Fe-4S] cluster as a cofactor.

Involved in iron-sulfur cluster biogenesis. Binds a 4Fe-4S cluster, can transfer this cluster to apoproteins, and thereby intervenes in the maturation of Fe/S proteins. Could also act as a scaffold/chaperone for damaged Fe/S proteins. The protein is Fe/S biogenesis protein NfuA of Erwinia tasmaniensis (strain DSM 17950 / CFBP 7177 / CIP 109463 / NCPPB 4357 / Et1/99).